The primary structure comprises 129 residues: Fluoride-specific ion channel FluC 2 (129 aa).

4 consecutive transmembrane segments (helical) span residues Phe-3–Trp-23, Ala-32–Ala-52, Leu-59–Phe-79, and Gly-90–Val-110. Na(+) contacts are provided by Gly-71 and Thr-74.

Belongs to the fluoride channel Fluc/FEX (TC 1.A.43) family.

The protein resides in the cell membrane. It catalyses the reaction fluoride(in) = fluoride(out). Its activity is regulated as follows. Na(+) is not transported, but it plays an essential structural role and its presence is essential for fluoride channel function. Fluoride-specific ion channel. Important for reducing fluoride concentration in the cell, thus reducing its toxicity. This is Fluoride-specific ion channel FluC 2 from Listeria monocytogenes serotype 4b (strain F2365).